A 391-amino-acid chain; its full sequence is Multidrug resistance protein MdtL (391 aa).

12 helical membrane passes run 4–24 (FLIC…MYLV), 42–62 (IAFS…GKVA), 69–89 (PVAI…SLAE), 93–113 (LFLA…VVAF), 131–151 (LLNG…HLIM), 158–178 (SLFW…LFIL), 203–222 (FFLS…LTFV), 245–265 (ALTA…LGIF), 269–289 (TLMI…AVSP), 293–313 (VSLF…GVAM), 331–351 (LGIA…VVGI), and 356–376 (MLIG…MFVA).

It belongs to the major facilitator superfamily. DHA1 family. MdtL (TC 2.A.1.2.22) subfamily.

It localises to the cell inner membrane. In terms of biological role, confers resistance to chloramphenicol. The polypeptide is Multidrug resistance protein MdtL (Escherichia coli O9:H4 (strain HS)).